The sequence spans 450 residues: Tubulin beta-3 chain (450 aa).

Positions 11, 69, 138, 142, 143, 144, 204, and 226 each coordinate GTP. Glu-69 contacts Mg(2+). Residues 420–450 (SEYQQYQDATADEEGDYEDEEEGEYQQEEEY) form a disordered region. Over residues 429-450 (TADEEGDYEDEEEGEYQQEEEY) the composition is skewed to acidic residues.

Belongs to the tubulin family. Dimer of alpha and beta chains. A typical microtubule is a hollow water-filled tube with an outer diameter of 25 nm and an inner diameter of 15 nM. Alpha-beta heterodimers associate head-to-tail to form protofilaments running lengthwise along the microtubule wall with the beta-tubulin subunit facing the microtubule plus end conferring a structural polarity. Microtubules usually have 13 protofilaments but different protofilament numbers can be found in some organisms and specialized cells. Mg(2+) serves as cofactor.

The protein resides in the cytoplasm. It localises to the cytoskeleton. Tubulin is the major constituent of microtubules, a cylinder consisting of laterally associated linear protofilaments composed of alpha- and beta-tubulin heterodimers. Microtubules grow by the addition of GTP-tubulin dimers to the microtubule end, where a stabilizing cap forms. Below the cap, tubulin dimers are in GDP-bound state, owing to GTPase activity of alpha-tubulin. This chain is Tubulin beta-3 chain (TUBB3), found in Arabidopsis thaliana (Mouse-ear cress).